A 290-amino-acid chain; its full sequence is MKRTPHLLAIQSHVVFGHAGNSAAVFPMQRIGVNAWPLNTVQFSNHTQYGQWAGEVLAPAQIPALVEGISNIGELGHCDAVLSGYLGSAEQGRAILAGVERIKAVNPKALYLCDPVMGHPEKGCIVPPEVSEFLLDEAAATADILCPNQLELDSFCGRRAQSLEDCVNMARSLLQRGPQVVLVKHLAYPGRAEEQFEMLLVTAEHSWHLRRPLLAFPRQPVGVGDLTSGLFLARVLLGDSWVQAFEFTAAAVHEVLLETQACASYELQLVRAQDRIAHPRVRFEAQLLAL.

Residues Ser12 and 47 to 48 contribute to the substrate site; that span reads TQ. Residues Asp114, Glu151, Lys184, and 211-214 each bind ATP; that span reads RPLL. Substrate is bound at residue Asp225.

The protein belongs to the pyridoxine kinase family. PdxY subfamily. In terms of assembly, homodimer. Requires Mg(2+) as cofactor.

It carries out the reaction pyridoxal + ATP = pyridoxal 5'-phosphate + ADP + H(+). The protein operates within cofactor metabolism; pyridoxal 5'-phosphate salvage; pyridoxal 5'-phosphate from pyridoxal: step 1/1. In terms of biological role, pyridoxal kinase involved in the salvage pathway of pyridoxal 5'-phosphate (PLP). Catalyzes the phosphorylation of pyridoxal to PLP. The sequence is that of Pyridoxal kinase PdxY from Pseudomonas putida (strain ATCC 700007 / DSM 6899 / JCM 31910 / BCRC 17059 / LMG 24140 / F1).